Reading from the N-terminus, the 1221-residue chain is Fibulin-2 (1221 aa).

Residues 1 to 26 form the signal peptide; it reads MLLQESAGVWLALALVTALTPSPSMA. A subdomain NA (Cys-rich) region spans residues 27-176; it reads VPWQDCTGAE…ELICYQLPGC (150 aa). The tract at residues 27–434 is n; the sequence is VPWQDCTGAE…DGSTKDLIET (408 aa). The subdomain NB (Cys-free) stretch occupies residues 177–434; sequence HGNFSDAEEG…DGSTKDLIET (258 aa). The N-linked (GlcNAc...) asparagine glycan is linked to Asn179. Disordered stretches follow at residues 248–329 and 341–399; these read PTAA…LIPD and GAAP…PQHP. The segment covering 270-283 has biased composition (acidic residues); that stretch reads DTEEDEEEEEEETL. The segment covering 312 to 322 has biased composition (basic and acidic residues); that stretch reads QEKEAEAKAGP. The short motif at 421 to 423 is the Cell attachment site element; sequence RGD. 11 cysteine pairs are disulfide-bonded: Cys435–Cys462, Cys436–Cys469, Cys449–Cys470, Cys479–Cys508, Cys492–Cys509, Cys511–Cys535, Cys512–Cys542, Cys525–Cys543, Cys598–Cys610, Cys606–Cys619, and Cys621–Cys634. 3 consecutive Anaphylatoxin-like domains span residues 435–477, 478–510, and 511–543; these read CCAA…LKEK, SCVA…QCCD, and CCGL…LSCC. Asn497 carries an N-linked (GlcNAc...) asparagine glycan. One can recognise an EGF-like 1; calcium-binding domain in the interval 594-635; it reads DQDECLMLPGELCQHLCINTVGSYRCACFPGFELQGDGRTCR. The tract at residues 633–661 is disordered; the sequence is TCRPDRGAPQLDTARESAPRSESAQVSPN. Residues 652 to 661 show a composition bias toward polar residues; it reads RSESAQVSPN. Residues 669–708 enclose the EGF-like 2 domain; sequence QPNTCKDNGPCRQVCRVVGDTAMCSCFPGYAIMADGVSCE. 5 disulfides stabilise this stretch: Cys673-Cys683, Cys679-Cys692, Cys694-Cys707, Cys713-Cys726, and Cys720-Cys735. The EGF-like 3; calcium-binding domain maps to 709-755; the sequence is DQDECLMGTHDCSWKQFCVNTLGSFYCVNHTVLCAEGYILNAHRKCV. Asn737 carries N-linked (GlcNAc...) asparagine glycosylation. A disulfide bridge connects residues Cys742 and Cys754. In terms of domain architecture, EGF-like 4; calcium-binding spans 756-800; sequence DINECVTDLHTCTRAEHCVNTPGSFQCYKALTCEPGYVLTDGECT. Positions 801–846 constitute an EGF-like 5; calcium-binding domain; sequence DVDECVTGTHNCQAGFSCQNTKGSFYCQARQRCMDGFLQDPEGNCV. Cystine bridges form between Cys805-Cys818, Cys812-Cys827, and Cys833-Cys845. Residues 847 to 894 enclose the EGF-like 6; calcium-binding domain; that stretch reads DINECTSLLEPCRSGFSCINTVGSYTCQRNPLVCGRGYHANEEGSECV. The 43-residue stretch at 895 to 937 folds into the EGF-like 7; calcium-binding domain; sequence DVNECETGVHRCGEGQLCYNLPGSYRCDCKPGFQRDAFGRTCI. 15 disulfides stabilise this stretch: Cys899/Cys912, Cys906/Cys921, Cys923/Cys936, Cys942/Cys954, Cys950/Cys963, Cys965/Cys978, Cys984/Cys993, Cys989/Cys1002, Cys1004/Cys1017, Cys1023/Cys1035, Cys1031/Cys1044, Cys1046/Cys1060, Cys1066/Cys1079, Cys1073/Cys1088, and Cys1093/Cys1105. In terms of domain architecture, EGF-like 8; calcium-binding spans 938-979; the sequence is DVNECWVSPGRLCQHTCENTPGSYRCSCAAGFLLAADGKHCE. The region spanning 980-1018 is the EGF-like 9; calcium-binding domain; the sequence is DVNECETRRCSQECANIYGSYQCYCRQGYQLAEDGHTCT. Residues 1019–1061 enclose the EGF-like 10; calcium-binding domain; sequence DIDECAQGAGILCTFRCVNVPGSYQCACPEQGYTMMANGRSCK. Positions 1062 to 1106 constitute an EGF-like 11; calcium-binding domain; it reads DLDECALGTHNCSEAETCHNIQGSFRCLRFDCPPNYVRVSETKCE. An N-linked (GlcNAc...) asparagine glycan is attached at Asn1072. A domain III region spans residues 1111-1221; that stretch reads QDITECQTSP…MYIFFTTFAP (111 aa).

It belongs to the fibulin family. As to quaternary structure, homotrimer; disulfide-linked. Interacts with LAMA2. Interacts with FBN1 (via N-terminal domain). Forms a ternary complex with ELN and FBN1. In terms of tissue distribution, component of both basement membranes and other connective tissues.

It is found in the secreted. Its subcellular location is the extracellular space. It localises to the extracellular matrix. In terms of biological role, its binding to fibronectin and some other ligands is calcium dependent. May act as an adapter that mediates the interaction between FBN1 and ELN. The protein is Fibulin-2 (Fbln2) of Mus musculus (Mouse).